The following is a 729-amino-acid chain: Neurochondrin (729 aa).

Serine 2 is subject to N-acetylserine. Serine 2 carries the post-translational modification Phosphoserine. Residues cysteine 3 and cysteine 4 are each lipidated (S-palmitoyl cysteine). An Asymmetric dimethylarginine modification is found at arginine 75. Serine 448 carries the post-translational modification Phosphoserine.

The protein belongs to the neurochondrin family. Interacts with MCHR1. Interacts with SEMA4C. Interacts with DIAPH1 (via FH3 domain). Interacts with GRM5. Palmitoylated. Palmitoylation by ZDHHC1, ZDHHC3 and ZDHHC11 regulates the association of NCDN with endosome membranes. May also be palmitoylated by ZDHHC7. Expressed in the neuronal, chondral and bone tissues. Expressed in dendrites. Enriched in the brain in the surface layer I-IV. In brains, protein level increases in male but decreases in female with advancing age (at protein level). In adult brains, it is highly expressed in the forebrain and hindbrain. Highly expressed in the hippocampus, piriform cortex, septum, amygdaloid complex, medial geniculate nucleus, inferior colliculus, cerebellar nuclei and the nuclei of the Vth, VIIth, and XIIth cranial nerves. In bone tissues, it is expressed in osteoblasts and osteocytes.

The protein resides in the cytoplasm. Its subcellular location is the cytosol. It localises to the endosome membrane. The protein localises to the cell projection. It is found in the dendrite. The protein resides in the postsynapse. In terms of biological role, probably involved in signal transduction, in the nervous system, via increasing cell surface localization of GRM5 and positively regulating its signaling. Required for the spatial learning process. Acts as a negative regulator of Ca(2+)-calmodulin-dependent protein kinase 2 (CaMK2) phosphorylation. May play a role in modulating melanin-concentrating hormone-mediated functions via its interaction with MCHR1 that interferes with G protein-coupled signal transduction. May be involved in bone metabolism. May also be involved in neurite outgrowth. The chain is Neurochondrin (Ncdn) from Mus musculus (Mouse).